Consider the following 251-residue polypeptide: Ubiquinone/menaquinone biosynthesis C-methyltransferase UbiE (251 aa).

S-adenosyl-L-methionine-binding positions include threonine 74, aspartate 95, 123–124 (NA), and serine 140.

Belongs to the class I-like SAM-binding methyltransferase superfamily. MenG/UbiE family.

It catalyses the reaction a 2-demethylmenaquinol + S-adenosyl-L-methionine = a menaquinol + S-adenosyl-L-homocysteine + H(+). It carries out the reaction a 2-methoxy-6-(all-trans-polyprenyl)benzene-1,4-diol + S-adenosyl-L-methionine = a 5-methoxy-2-methyl-3-(all-trans-polyprenyl)benzene-1,4-diol + S-adenosyl-L-homocysteine + H(+). Its pathway is quinol/quinone metabolism; menaquinone biosynthesis; menaquinol from 1,4-dihydroxy-2-naphthoate: step 2/2. It functions in the pathway cofactor biosynthesis; ubiquinone biosynthesis. Methyltransferase required for the conversion of demethylmenaquinol (DMKH2) to menaquinol (MKH2) and the conversion of 2-polyprenyl-6-methoxy-1,4-benzoquinol (DDMQH2) to 2-polyprenyl-3-methyl-6-methoxy-1,4-benzoquinol (DMQH2). The polypeptide is Ubiquinone/menaquinone biosynthesis C-methyltransferase UbiE (Pectobacterium carotovorum subsp. carotovorum (strain PC1)).